The sequence spans 272 residues: MLTKRIIPCLDIKEGRVVKGTNFVELKDAGDPVELSKIYNEQGADELVFLDITASFEKRGIIIDVVKRTAEQVFIPLTVGGGIKTVDDFRKILRAGADKISINTSAVKTPKLIKEASEIFGTQCVVVAMDVKRNYITNPRDENLKDKNVFETKHGSCWFEVYIYGGREGTGIDAIEWAKKVEILGAGEILLTSMDADGTKDGYDLVLTRAISEKVKLPIIASGGCGNAKHVVDAFKDGKADAALMASILHYRECTVNDLKKEVEKNNIPVRF.

Catalysis depends on residues Asp-11 and Asp-130.

The protein belongs to the HisA/HisF family. As to quaternary structure, heterodimer of HisH and HisF.

The protein resides in the cytoplasm. The catalysed reaction is 5-[(5-phospho-1-deoxy-D-ribulos-1-ylimino)methylamino]-1-(5-phospho-beta-D-ribosyl)imidazole-4-carboxamide + L-glutamine = D-erythro-1-(imidazol-4-yl)glycerol 3-phosphate + 5-amino-1-(5-phospho-beta-D-ribosyl)imidazole-4-carboxamide + L-glutamate + H(+). The protein operates within amino-acid biosynthesis; L-histidine biosynthesis; L-histidine from 5-phospho-alpha-D-ribose 1-diphosphate: step 5/9. IGPS catalyzes the conversion of PRFAR and glutamine to IGP, AICAR and glutamate. The HisF subunit catalyzes the cyclization activity that produces IGP and AICAR from PRFAR using the ammonia provided by the HisH subunit. The protein is Imidazole glycerol phosphate synthase subunit HisF of Methanococcus maripaludis (strain C6 / ATCC BAA-1332).